The following is a 225-amino-acid chain: Insulin-induced gene 2 protein (225 aa).

Topologically, residues 1–28 (MAEGETKSPGPKKCGPYISSVTSQSVNL) are cytoplasmic. The helical transmembrane segment at 29-51 (MIRGVVLFFIGVFLALVLNLLQI) threads the bilayer. Over 52 to 70 (QRNVTLFPPDVIASIFSSA) the chain is Lumenal. The helical transmembrane segment at 71–88 (WWVPPCCGTASAVIGLLY) threads the bilayer. Residues 89-103 (PCIDRHLGEPHKFKR) are Cytoplasmic-facing. The chain crosses the membrane as a helical span at residues 104-126 (EWSSVMRCVAVFVGINHASAKVD). Residues 127-129 (FDN) are Lumenal-facing. A helical transmembrane segment spans residues 130–148 (NIQLSLTLAALSIGLWWTF). The Cytoplasmic portion of the chain corresponds to 149 to 153 (DRSRS). Phosphoserine is present on S151. The chain crosses the membrane as a helical span at residues 154 to 175 (GFGLGVGIAFLATVVTQLLVYN). Over 176–189 (GVYQYTSPDFLYVR) the chain is Lumenal. A helical membrane pass occupies residues 190 to 207 (SWLPCIFFAGGITMGNIG). Residues 208 to 225 (RQLAMYECKVIAEKSHQE) are Cytoplasmic-facing. C215 is modified (cysteine sulfenic acid (-SOH); alternate). A Glycyl cysteine thioester (Cys-Gly) (interchain with G-Cter in ubiquitin); alternate cross-link involves residue C215. Positions 219-225 (AEKSHQE) match the KxHxx motif.

The protein belongs to the INSIG family. As to quaternary structure, interacts with SCAP; interaction is direct and only takes place in the presence of sterols; it prevents interaction between SCAP and the coat protein complex II (COPII). Associates with the SCAP-SREBP complex (composed of SCAP and SREBF1/SREBP1 or SREBF2/SREBP2); association is mediated via its interaction with SCAP and only takes place in the presence of sterols. Interacts with RNF139. Interacts with RNF145. In terms of processing, phosphorylation at Ser-151 by PCK1 reduces binding to oxysterol, disrupting the interaction between INSIG2 and SCAP, thereby promoting nuclear translocation of SREBP proteins (SREBF1/SREBP1 or SREBF2/SREBP2) and subsequent transcription of downstream lipogenesis-related genes. Post-translationally, polyubiquitinated by AMFR/gp78 at Cys-215 in some tissues such as adipose tissues, undifferentiated myoblasts and liver, leading to its degradation. In differentiated myotubes, Cys-215 oxidation prevents ubiquitination at the same site, resulting in protein stabilization. Oxidized at Cys-215 in differentiated myotubes, preventing ubiquitination at the same site, and resulting in protein stabilization.

The protein resides in the endoplasmic reticulum membrane. In terms of biological role, oxysterol-binding protein that mediates feedback control of cholesterol synthesis by controlling both endoplasmic reticulum to Golgi transport of SCAP and degradation of HMGCR. Acts as a negative regulator of cholesterol biosynthesis by mediating the retention of the SCAP-SREBP complex in the endoplasmic reticulum, thereby blocking the processing of sterol regulatory element-binding proteins (SREBPs) SREBF1/SREBP1 and SREBF2/SREBP2. Binds oxysterol, including 22-hydroxycholesterol, 24-hydroxycholesterol, 25-hydroxycholesterol and 27-hydroxycholesterol, regulating interaction with SCAP and retention of the SCAP-SREBP complex in the endoplasmic reticulum. In presence of oxysterol, interacts with SCAP, retaining the SCAP-SREBP complex in the endoplasmic reticulum, thereby preventing SCAP from escorting SREBF1/SREBP1 and SREBF2/SREBP2 to the Golgi. Sterol deprivation or phosphorylation by PCK1 reduce oxysterol-binding, disrupting the interaction between INSIG2 and SCAP, thereby promoting Golgi transport of the SCAP-SREBP complex, followed by processing and nuclear translocation of SREBF1/SREBP1 and SREBF2/SREBP2. Also regulates cholesterol synthesis by regulating degradation of HMGCR: initiates the sterol-mediated ubiquitin-mediated endoplasmic reticulum-associated degradation (ERAD) of HMGCR via recruitment of the reductase to the ubiquitin ligase RNF139. The protein is Insulin-induced gene 2 protein of Pongo abelii (Sumatran orangutan).